Reading from the N-terminus, the 399-residue chain is tRNA-dihydrouridine(16/17) synthase [NAD(P)(+)] (399 aa).

FMN contacts are provided by residues 24-26 and glutamine 80; that span reads PMV. Cysteine 109 functions as the Proton donor in the catalytic mechanism. Residues lysine 148, histidine 176, 211 to 213, and 235 to 236 each bind FMN; these read NGN and AE.

This sequence belongs to the Dus family. Dus1 subfamily. FMN serves as cofactor.

Its subcellular location is the nucleus. The protein resides in the mitochondrion. The enzyme catalyses 5,6-dihydrouridine(16) in tRNA + NADP(+) = uridine(16) in tRNA + NADPH + H(+). The catalysed reaction is 5,6-dihydrouridine(16) in tRNA + NAD(+) = uridine(16) in tRNA + NADH + H(+). It carries out the reaction 5,6-dihydrouridine(17) in tRNA + NAD(+) = uridine(17) in tRNA + NADH + H(+). It catalyses the reaction 5,6-dihydrouridine(17) in tRNA + NADP(+) = uridine(17) in tRNA + NADPH + H(+). The enzyme catalyses a 5,6-dihydrouridine in mRNA + NAD(+) = a uridine in mRNA + NADH + H(+). The catalysed reaction is a 5,6-dihydrouridine in mRNA + NADP(+) = a uridine in mRNA + NADPH + H(+). Catalyzes the synthesis of dihydrouridine, a modified base found in the D-loop of most tRNAs. Also able to mediate dihydrouridylation of some mRNAs, thereby affecting their translation. In Schizosaccharomyces pombe (strain 972 / ATCC 24843) (Fission yeast), this protein is tRNA-dihydrouridine(16/17) synthase [NAD(P)(+)].